The primary structure comprises 201 residues: UPF0301 protein R00917 (201 aa).

The protein belongs to the UPF0301 (AlgH) family.

This Rhizobium meliloti (strain 1021) (Ensifer meliloti) protein is UPF0301 protein R00917.